Consider the following 468-residue polypeptide: DNA polymerase IV 1 (468 aa).

The region spanning Val-6–Gly-188 is the UmuC domain. Positions 10 and 105 each coordinate Mg(2+). Residue Glu-106 is part of the active site.

It belongs to the DNA polymerase type-Y family. Monomer. Mg(2+) serves as cofactor.

It is found in the cytoplasm. It catalyses the reaction DNA(n) + a 2'-deoxyribonucleoside 5'-triphosphate = DNA(n+1) + diphosphate. In terms of biological role, poorly processive, error-prone DNA polymerase involved in untargeted mutagenesis. Copies undamaged DNA at stalled replication forks, which arise in vivo from mismatched or misaligned primer ends. These misaligned primers can be extended by PolIV. Exhibits no 3'-5' exonuclease (proofreading) activity. May be involved in translesional synthesis, in conjunction with the beta clamp from PolIII. The sequence is that of DNA polymerase IV 1 (dinB1) from Mycobacterium tuberculosis (strain CDC 1551 / Oshkosh).